The sequence spans 475 residues: Phosphoglucosamine mutase (475 aa).

The Phosphoserine intermediate role is filled by S126. Residues S126, D265, D267, and D269 each coordinate Mg(2+). S126 bears the Phosphoserine mark.

The protein belongs to the phosphohexose mutase family. The cofactor is Mg(2+). In terms of processing, activated by phosphorylation.

The enzyme catalyses alpha-D-glucosamine 1-phosphate = D-glucosamine 6-phosphate. Catalyzes the conversion of glucosamine-6-phosphate to glucosamine-1-phosphate. This Synechococcus sp. (strain ATCC 27144 / PCC 6301 / SAUG 1402/1) (Anacystis nidulans) protein is Phosphoglucosamine mutase.